Reading from the N-terminus, the 264-residue chain is Thiazole synthase (264 aa).

Lys-106 serves as the catalytic Schiff-base intermediate with DXP. 1-deoxy-D-xylulose 5-phosphate contacts are provided by residues Gly-167, 193-194, and 215-216; these read AG and NT.

Belongs to the ThiG family. As to quaternary structure, homotetramer. Forms heterodimers with either ThiH or ThiS.

Its subcellular location is the cytoplasm. It catalyses the reaction [ThiS sulfur-carrier protein]-C-terminal-Gly-aminoethanethioate + 2-iminoacetate + 1-deoxy-D-xylulose 5-phosphate = [ThiS sulfur-carrier protein]-C-terminal Gly-Gly + 2-[(2R,5Z)-2-carboxy-4-methylthiazol-5(2H)-ylidene]ethyl phosphate + 2 H2O + H(+). It functions in the pathway cofactor biosynthesis; thiamine diphosphate biosynthesis. Its function is as follows. Catalyzes the rearrangement of 1-deoxy-D-xylulose 5-phosphate (DXP) to produce the thiazole phosphate moiety of thiamine. Sulfur is provided by the thiocarboxylate moiety of the carrier protein ThiS. In vitro, sulfur can be provided by H(2)S. This is Thiazole synthase from Stenotrophomonas maltophilia (strain K279a).